Consider the following 252-residue polypeptide: DNA-(apurinic or apyrimidinic site) lyase Nei2 (252 aa).

Residue Pro2 is the Schiff-base intermediate with DNA of the active site. The active-site Proton donor is Glu3. Residue Lys51 is the Proton donor (in beta-elimination) of the active site. The FPG-type zinc finger occupies 216–250 (WVYGRAGEPCRRCGTLIQTDRGGERVTYWCPVCQT). Cys225, Cys228, Cys245, and Cys248 together coordinate Zn(2+).

This sequence belongs to the FPG family. As to quaternary structure, monomer. Zn(2+) is required as a cofactor.

The enzyme catalyses 2'-deoxyribonucleotide-(2'-deoxyribose 5'-phosphate)-2'-deoxyribonucleotide-DNA = a 3'-end 2'-deoxyribonucleotide-(2,3-dehydro-2,3-deoxyribose 5'-phosphate)-DNA + a 5'-end 5'-phospho-2'-deoxyribonucleoside-DNA + H(+). Involved in base excision repair of DNA damaged by oxidation or by mutagenic agents. Acts as DNA glycosylase that recognizes and removes damaged bases. In terms of biological role, involved in the repair of psoralen-UVA DNA cross-links. A lyase that cleaves single-stranded (ss)DNA but not double-stranded (ds)DNA with an abasic site. Has 5-hydroxyuracil (5-OH-U) glycosylase activity on ssDNA with 5-OH-U, with 10-fold less activity on dsDNA, but weak to no uracil glycosylase activity. Has weak glycosylase activity on thymine glycol and dihydrothymine residues in ssDNA. Cleaves the DNA backbone by beta-delta elimination to generate a single-strand break at the site of the removed base with both 3'- and 5'-phosphates. The chain is DNA-(apurinic or apyrimidinic site) lyase Nei2 from Mycolicibacterium smegmatis (strain ATCC 700084 / mc(2)155) (Mycobacterium smegmatis).